The chain runs to 334 residues: E3 ubiquitin-protein ligase CIP8 (334 aa).

A disordered region spans residues 111-158 (LNSRNEIDDDEDEDEDDGDEEEEDEEENLTVNDEEDEEDDLRRRNRFP). Residues 117–149 (IDDDEDEDEDDGDEEEEDEEENLTVNDEEDEED) are compositionally biased toward acidic residues. An RING-type; atypical zinc finger spans residues 257–298 (CAVCKDGMVMGETGKKLPCGHCYHGDCIVPWLGTRNSCPVCR). Residues 307 to 334 (EYEEERKKRTSTVSDSAAASSSSSTSRY) form a disordered region. Low complexity predominate over residues 317–334 (STVSDSAAASSSSSTSRY).

Interacts with the RING finger of COP1. Interacts with UBC8 through its N-terminal region. In terms of tissue distribution, expressed in both light- and dark-grown seedlings.

The protein localises to the cytoplasm. It catalyses the reaction S-ubiquitinyl-[E2 ubiquitin-conjugating enzyme]-L-cysteine + [acceptor protein]-L-lysine = [E2 ubiquitin-conjugating enzyme]-L-cysteine + N(6)-ubiquitinyl-[acceptor protein]-L-lysine.. It participates in protein modification; protein ubiquitination. E3 ubiquitin-protein ligase that mediates ubiquitination and subsequent proteasomal degradation of target proteins. Probably forms a minimal ubiquitin ligase complex in cooperation with the E2 enzyme UBC8. Its interaction with COP1 suggests that it may participate in proteasome-mediated degradation of HY5 in vivo. The chain is E3 ubiquitin-protein ligase CIP8 (CIP8) from Arabidopsis thaliana (Mouse-ear cress).